The primary structure comprises 567 residues: MFS-type transporter poxA (567 aa).

Basic and acidic residues predominate over residues 1 to 23 (MPASDRTSETGDVEKVTAAETPK). Residues 1–24 (MPASDRTSETGDVEKVTAAETPKE) form a disordered region. 10 helical membrane-spanning segments follow: residues 35 to 55 (ALTGLPLYTVLVGLGLALFLG), 77 to 97 (ADIGWYGAAYPLTMSSIQLLA), 108 to 128 (LVFLVFFGLFMLGSLLCGVAV), 141 to 161 (GAGAAGVLSGTLAIVSAVVPL), 165 to 185 (SLILGLMMSLVGTAVVLGPVI), 197 to 217 (WCFYLNLPCGGVTLLALILFF), 240 to 260 (LAGCLGFIPAVVMLLLALQWG), 271 to 291 (SATIIGLFCGAGVSLILFLIW), 311 to 331 (IIASCLYGFALLGGYVVVGYF), and 349 to 369 (VMLLPNVITNFISKAVIGVIV). The N-linked (GlcNAc...) asparagine glycan is linked to Asn-370. The next 4 helical transmembrane spans lie at 372 to 392 (TGYFNPWLFFGAAVLAIGSGL), 410 to 430 (ILQGAALGIIQAPTLGVQVAL), 436 to 456 (LIPVALSLVIFFQYFGSSIML), and 515 to 535 (AIAGVMWLSTAAALFGFLVSF). The segment at 547 to 567 (EENKKEAAEEEEEVKVAAVEA) is disordered.

This sequence belongs to the major facilitator superfamily. TCR/Tet family.

Its subcellular location is the cell membrane. MFS-type transporter; part of the gene cluster that mediates the biosynthesis of oxaleimides, cytotoxic compounds containing an unusual disubstituted succinimide moiety. In Penicillium oxalicum (strain 114-2 / CGMCC 5302) (Penicillium decumbens), this protein is MFS-type transporter poxA.